The chain runs to 153 residues: D-aminoacyl-tRNA deacylase (153 aa).

Positions 140 to 141 (GP) match the Gly-cisPro motif, important for rejection of L-amino acids motif.

This sequence belongs to the DTD family. Homodimer.

It localises to the cytoplasm. The enzyme catalyses glycyl-tRNA(Ala) + H2O = tRNA(Ala) + glycine + H(+). It catalyses the reaction a D-aminoacyl-tRNA + H2O = a tRNA + a D-alpha-amino acid + H(+). In terms of biological role, an aminoacyl-tRNA editing enzyme that deacylates mischarged D-aminoacyl-tRNAs. Also deacylates mischarged glycyl-tRNA(Ala), protecting cells against glycine mischarging by AlaRS. Acts via tRNA-based rather than protein-based catalysis; rejects L-amino acids rather than detecting D-amino acids in the active site. By recycling D-aminoacyl-tRNA to D-amino acids and free tRNA molecules, this enzyme counteracts the toxicity associated with the formation of D-aminoacyl-tRNA entities in vivo and helps enforce protein L-homochirality. The polypeptide is D-aminoacyl-tRNA deacylase (Trichodesmium erythraeum (strain IMS101)).